The chain runs to 406 residues: COP9 signalosome complex subunit 4 (406 aa).

The region spanning 197–366 (YRRKFIEAAQ…GIVHFETREP (170 aa)) is the PCI domain.

This sequence belongs to the CSN4 family. As to quaternary structure, component of the CSN complex, probably composed of cops1, cops2, cops3, cops4, cops5, cops6, cops7, cops8 and cops9.

The protein resides in the cytoplasm. It localises to the nucleus. It is found in the cytoplasmic vesicle. Its subcellular location is the secretory vesicle. The protein localises to the synaptic vesicle. Functionally, component of the COP9 signalosome complex (CSN), a complex involved in various cellular and developmental processes. The CSN complex is an essential regulator of the ubiquitin (Ubl) conjugation pathway by mediating the deneddylation of the cullin subunits of E3 ligase complexes, leading to modify the Ubl ligase activity. The protein is COP9 signalosome complex subunit 4 (cops4) of Danio rerio (Zebrafish).